Reading from the N-terminus, the 689-residue chain is Putative ATP-dependent helicase IRC3 (689 aa).

The Helicase ATP-binding domain occupies 46 to 211 (NSIRQGTKRI…SMVMDKIVYH (166 aa)). ATP is bound at residue 59–66 (LATGGGKT). Positions 158–161 (DEAH) match the DEAH box motif. Residues 265-438 (ILKTYLHKKQ…KIDERLRALF (174 aa)) enclose the Helicase C-terminal domain.

Belongs to the helicase family. IRC3 subfamily.

It is found in the mitochondrion. In Saccharomyces cerevisiae (strain ATCC 204508 / S288c) (Baker's yeast), this protein is Putative ATP-dependent helicase IRC3 (IRC3).